A 128-amino-acid chain; its full sequence is Ribonuclease P protein component (128 aa).

The protein belongs to the RnpA family. As to quaternary structure, consists of a catalytic RNA component (M1 or rnpB) and a protein subunit.

It carries out the reaction Endonucleolytic cleavage of RNA, removing 5'-extranucleotides from tRNA precursor.. Its function is as follows. RNaseP catalyzes the removal of the 5'-leader sequence from pre-tRNA to produce the mature 5'-terminus. It can also cleave other RNA substrates such as 4.5S RNA. The protein component plays an auxiliary but essential role in vivo by binding to the 5'-leader sequence and broadening the substrate specificity of the ribozyme. The chain is Ribonuclease P protein component from Chromohalobacter salexigens (strain ATCC BAA-138 / DSM 3043 / CIP 106854 / NCIMB 13768 / 1H11).